Reading from the N-terminus, the 619-residue chain is UvrABC system protein C (619 aa).

The 79-residue stretch at 20–98 folds into the GIY-YIG domain; it reads TAPGVYRMYA…IKSLSPRYNV (79 aa). The region spanning 207 to 242 is the UVR domain; the sequence is DQLGEEIMHSMQQASEALEFERAARLRDLLSSLRSM.

It belongs to the UvrC family. As to quaternary structure, interacts with UvrB in an incision complex.

The protein resides in the cytoplasm. Its function is as follows. The UvrABC repair system catalyzes the recognition and processing of DNA lesions. UvrC both incises the 5' and 3' sides of the lesion. The N-terminal half is responsible for the 3' incision and the C-terminal half is responsible for the 5' incision. This chain is UvrABC system protein C, found in Xanthomonas axonopodis pv. citri (strain 306).